The primary structure comprises 522 residues: Putative lipase ATG15 (522 aa).

Over 1 to 5 (MYIPG) the chain is Cytoplasmic. The helical; Signal-anchor for type II membrane protein transmembrane segment at 6–26 (PLRLSSYLLPFLSSPSPPAQS) threads the bilayer. At 27–522 (SPDTRTISFK…CYKWEFGEWN (496 aa)) the chain is on the lumenal side. 6 N-linked (GlcNAc...) asparagine glycosylation sites follow: Asn48, Asn133, Asn196, Asn220, Asn302, and Asn309. Residue Ser318 is the Charge relay system of the active site. Residue Asn361 is glycosylated (N-linked (GlcNAc...) asparagine). Residues 481 to 506 (RRGPKRQPGGEDPGWRKHGGVPKPVS) form a disordered region.

Belongs to the AB hydrolase superfamily. Lipase family. As to quaternary structure, binds to both phosphatidylinositol (PI) and phosphatidylinositol 3,5-bisphosphate (PIP2).

It localises to the endoplasmic reticulum membrane. Its subcellular location is the golgi apparatus membrane. It is found in the endosome. The protein localises to the multivesicular body membrane. The protein resides in the prevacuolar compartment membrane. It catalyses the reaction a triacylglycerol + H2O = a diacylglycerol + a fatty acid + H(+). Functionally, lipase which is essential for lysis of subvacuolar cytoplasm to vacuole targeted bodies and intravacuolar autophagic bodies. Involved in the lysis of intravacuolar multivesicular body (MVB) vesicles. The intravacuolar membrane disintegration by ATG15 is critical to life span extension. The chain is Putative lipase ATG15 (ATG15) from Cryptococcus neoformans var. neoformans serotype D (strain JEC21 / ATCC MYA-565) (Filobasidiella neoformans).